A 234-amino-acid chain; its full sequence is Leucyl/phenylalanyl-tRNA--protein transferase (234 aa).

Belongs to the L/F-transferase family.

It localises to the cytoplasm. The catalysed reaction is N-terminal L-lysyl-[protein] + L-leucyl-tRNA(Leu) = N-terminal L-leucyl-L-lysyl-[protein] + tRNA(Leu) + H(+). It carries out the reaction N-terminal L-arginyl-[protein] + L-leucyl-tRNA(Leu) = N-terminal L-leucyl-L-arginyl-[protein] + tRNA(Leu) + H(+). It catalyses the reaction L-phenylalanyl-tRNA(Phe) + an N-terminal L-alpha-aminoacyl-[protein] = an N-terminal L-phenylalanyl-L-alpha-aminoacyl-[protein] + tRNA(Phe). Functions in the N-end rule pathway of protein degradation where it conjugates Leu, Phe and, less efficiently, Met from aminoacyl-tRNAs to the N-termini of proteins containing an N-terminal arginine or lysine. This Shigella sonnei (strain Ss046) protein is Leucyl/phenylalanyl-tRNA--protein transferase.